A 372-amino-acid chain; its full sequence is N-methyl-L-tryptophan oxidase (372 aa).

Asp-4–His-34 serves as a coordination point for FAD. Cys-308 carries the S-8alpha-FAD cysteine modification.

It belongs to the MSOX/MTOX family. MTOX subfamily. Monomer. FAD serves as cofactor.

The catalysed reaction is N(alpha)-methyl-L-tryptophan + O2 + H2O = L-tryptophan + formaldehyde + H2O2. In terms of biological role, catalyzes the oxidative demethylation of N-methyl-L-tryptophan. This Escherichia coli O9:H4 (strain HS) protein is N-methyl-L-tryptophan oxidase.